The primary structure comprises 340 residues: KH domain-containing RNA-binding protein QKI (340 aa).

The region spanning 87–153 is the KH domain; sequence YVPVKEYPDF…WEHLNEDLHV (67 aa). An SH3-binding motif is present at residues 275–278; it reads PPGP. The Nuclear localization signal signature appears at 323–329; that stretch reads RVHPYQR.

It belongs to the quaking family. As to quaternary structure, homodimer; does not require RNA to homodimerize.

The protein resides in the cytoplasm. It localises to the nucleus. Its function is as follows. RNA reader protein, which recognizes and binds specific RNAs, thereby regulating RNA metabolic processes, such as pre-mRNA splicing, circular RNA (circRNA) formation, mRNA export, mRNA stability and/or translation. Involved in various cellular processes, such as mRNA storage into stress granules, apoptosis, interferon response, glial cell fate and development. Binds to the 5'-NACUAAY-N(1,20)-UAAY-3' RNA core sequence. Acts as a mRNA modification reader that specifically recognizes and binds mRNA transcripts modified by internal N(7)-methylguanine (m7G). Promotes the formation of circular RNAs (circRNAs): acts by binding to sites flanking circRNA-forming exons. CircRNAs are produced by back-splicing circularization of pre-mRNAs. Required to protect and promote stability of mRNAs which promotes oligodendrocyte differentiation. Acts as an important regulator of muscle development. The chain is KH domain-containing RNA-binding protein QKI from Gallus gallus (Chicken).